The primary structure comprises 432 residues: Tol-Pal system protein TolB (432 aa).

The N-terminal stretch at 1–29 is a signal peptide; sequence MMRNVWKSGLRRSAWIGLLMVLCVGVARA.

It belongs to the TolB family. In terms of assembly, the Tol-Pal system is composed of five core proteins: the inner membrane proteins TolA, TolQ and TolR, the periplasmic protein TolB and the outer membrane protein Pal. They form a network linking the inner and outer membranes and the peptidoglycan layer.

It localises to the periplasm. Its function is as follows. Part of the Tol-Pal system, which plays a role in outer membrane invagination during cell division and is important for maintaining outer membrane integrity. This chain is Tol-Pal system protein TolB, found in Ralstonia nicotianae (strain ATCC BAA-1114 / GMI1000) (Ralstonia solanacearum).